A 588-amino-acid chain; its full sequence is Arginine--tRNA ligase (588 aa).

The 'HIGH' region motif lies at 129–139 (PNIAKEMHVGH).

The protein belongs to the class-I aminoacyl-tRNA synthetase family. Monomer.

Its subcellular location is the cytoplasm. It carries out the reaction tRNA(Arg) + L-arginine + ATP = L-arginyl-tRNA(Arg) + AMP + diphosphate. The protein is Arginine--tRNA ligase of Frankia casuarinae (strain DSM 45818 / CECT 9043 / HFP020203 / CcI3).